The sequence spans 50 residues: Protein hunchback (50 aa).

3 consecutive C2H2-type zinc fingers follow at residues 1 to 5, 11 to 33, and 39 to 50; these read HLRNH, FKCN…MKSH, and YRCADCTYATKY.

The protein belongs to the hunchback C2H2-type zinc-finger protein family.

It localises to the nucleus. In terms of biological role, gap class segmentation protein that controls development of head structures. The sequence is that of Protein hunchback (hb) from Platynereis dumerilii (Dumeril's clam worm).